A 292-amino-acid chain; its full sequence is Bis(5'-nucleosyl)-tetraphosphatase, symmetrical (292 aa).

The disordered stretch occupies residues 271–292; sequence LSIEHPRHTHTPRRQAKKHSKK. Positions 277-292 are enriched in basic residues; sequence RHTHTPRRQAKKHSKK.

The protein belongs to the Ap4A hydrolase family.

The enzyme catalyses P(1),P(4)-bis(5'-adenosyl) tetraphosphate + H2O = 2 ADP + 2 H(+). Its function is as follows. Hydrolyzes diadenosine 5',5'''-P1,P4-tetraphosphate to yield ADP. This is Bis(5'-nucleosyl)-tetraphosphatase, symmetrical (apaH) from Xylella fastidiosa (strain 9a5c).